The chain runs to 261 residues: tRNA(His) guanylyltransferase (261 aa).

D29, G30, and D76 together coordinate Mg(2+). Residues 29-34 (DGKGFH) and 75-76 (SD) each bind GTP.

It belongs to the tRNA(His) guanylyltransferase family. The cofactor is Mg(2+).

The enzyme catalyses a 5'-end ribonucleotide-tRNA(His) + GTP + ATP + H2O = a 5'-end phospho-guanosine-ribonucleotide-tRNA(His) + AMP + 2 diphosphate + H(+). Its function is as follows. Adds a GMP to the 5'-end of tRNA(His) after transcription and RNase P cleavage. The chain is tRNA(His) guanylyltransferase (thg1) from Schizosaccharomyces pombe (strain 972 / ATCC 24843) (Fission yeast).